Reading from the N-terminus, the 128-residue chain is MKKMLVEFRDFALKGNVLDLAVAVVIGAAFGKIVSSLVDNIIMPLVGVLLGGLDFTDLSFKVGKSVIQYGAFIQSIVDFIIIAFAIFIFVKVLTSFIKKKEQTVEETPVPPTEEYLKEIRDLLKEQQK.

2 helical membrane-spanning segments follow: residues 11-31 (FALKGNVLDLAVAVVIGAAFG) and 70-90 (GAFIQSIVDFIIIAFAIFIFV).

It belongs to the MscL family. As to quaternary structure, homopentamer.

It is found in the cell membrane. In terms of biological role, channel that opens in response to stretch forces in the membrane lipid bilayer. May participate in the regulation of osmotic pressure changes within the cell. This is Large-conductance mechanosensitive channel from Listeria monocytogenes serotype 4a (strain HCC23).